A 314-amino-acid polypeptide reads, in one-letter code: tRNA-cytidine(32) 2-sulfurtransferase (314 aa).

Residues 49-54 (SGGKDS) carry the PP-loop motif motif. Cysteine 124, cysteine 127, and cysteine 215 together coordinate [4Fe-4S] cluster.

The protein belongs to the TtcA family. As to quaternary structure, homodimer. The cofactor is Mg(2+). [4Fe-4S] cluster is required as a cofactor.

It localises to the cytoplasm. It carries out the reaction cytidine(32) in tRNA + S-sulfanyl-L-cysteinyl-[cysteine desulfurase] + AH2 + ATP = 2-thiocytidine(32) in tRNA + L-cysteinyl-[cysteine desulfurase] + A + AMP + diphosphate + H(+). It functions in the pathway tRNA modification. Catalyzes the ATP-dependent 2-thiolation of cytidine in position 32 of tRNA, to form 2-thiocytidine (s(2)C32). The sulfur atoms are provided by the cysteine/cysteine desulfurase (IscS) system. The protein is tRNA-cytidine(32) 2-sulfurtransferase of Histophilus somni (strain 2336) (Haemophilus somnus).